We begin with the raw amino-acid sequence, 804 residues long: Cyclic di-GMP-binding protein (804 aa).

A signal peptide spans 1 to 18 (MKMVSLIALLVFATGAQA). Residues 19-766 (APIASKAPAH…DWYMHNHPFR (748 aa)) lie on the Periplasmic side of the membrane. Residues 24–69 (KAPAHQPTGSDLPPLPAAAPVAPAAQPSAQAVDPASAAPASDAGSA) are disordered. The helical transmembrane segment at 767–787 (VIVVGLVGCLLVVAVLVRALF) threads the bilayer. Topologically, residues 788-804 (RHAMFRRRQLQEERQKS) are cytoplasmic.

The protein belongs to the AcsB/BcsB family. Tightly associated with the cellulose synthase catalytic subunit.

Its subcellular location is the cell inner membrane. Its pathway is glycan metabolism; bacterial cellulose biosynthesis. In terms of biological role, binds the cellulose synthase activator, bis-(3'-5') cyclic diguanylic acid (c-di-GMP). In Komagataeibacter xylinus (Gluconacetobacter xylinus), this protein is Cyclic di-GMP-binding protein (bcsBI).